The chain runs to 190 residues: Ribose 1,5-bisphosphate phosphokinase PhnN (190 aa).

19–26 (GPSGVGKD) contributes to the ATP binding site.

It belongs to the ribose 1,5-bisphosphokinase family.

The catalysed reaction is alpha-D-ribose 1,5-bisphosphate + ATP = 5-phospho-alpha-D-ribose 1-diphosphate + ADP. The protein operates within metabolic intermediate biosynthesis; 5-phospho-alpha-D-ribose 1-diphosphate biosynthesis; 5-phospho-alpha-D-ribose 1-diphosphate from D-ribose 5-phosphate (route II): step 3/3. Functionally, catalyzes the phosphorylation of ribose 1,5-bisphosphate to 5-phospho-D-ribosyl alpha-1-diphosphate (PRPP). This is Ribose 1,5-bisphosphate phosphokinase PhnN from Ruegeria sp. (strain TM1040) (Silicibacter sp.).